The sequence spans 137 residues: Transcription antitermination protein NusB (137 aa).

This sequence belongs to the NusB family.

Its function is as follows. Involved in transcription antitermination. Required for transcription of ribosomal RNA (rRNA) genes. Binds specifically to the boxA antiterminator sequence of the ribosomal RNA (rrn) operons. The chain is Transcription antitermination protein NusB from Clavibacter sepedonicus (Clavibacter michiganensis subsp. sepedonicus).